A 394-amino-acid polypeptide reads, in one-letter code: V-type proton ATPase subunit C (394 aa).

Position 17 is a phosphoserine (serine 17).

This sequence belongs to the V-ATPase C subunit family. As to quaternary structure, V-ATPase is a heteromultimeric enzyme composed of a peripheral catalytic V1 complex (components A to H) attached to an integral membrane V0 proton pore complex (components: a, c, c', c'', d, e, f and VOA1).

The protein resides in the cytoplasm. It localises to the vacuole membrane. Its function is as follows. Subunit of the V1 complex of vacuolar(H+)-ATPase (V-ATPase), a multisubunit enzyme composed of a peripheral complex (V1) that hydrolyzes ATP and a membrane integral complex (V0) that translocates protons. V-ATPase is responsible for acidifying and maintaining the pH of intracellular compartments. Subunit C is necessary for the assembly of the catalytic sector of the enzyme and is likely to have a specific function in its catalytic activity. Reversibly leaves the enzyme after glucose depletion, causing the catalytic subcomplex V1 to detach from the V0 section. This Schizosaccharomyces pombe (strain 972 / ATCC 24843) (Fission yeast) protein is V-type proton ATPase subunit C.